The primary structure comprises 231 residues: Ureidoacrylate amidohydrolase RutB (231 aa).

Residue Asp25 is the Proton acceptor of the active site. Lys134 is a catalytic residue. Cys167 functions as the Nucleophile in the catalytic mechanism.

This sequence belongs to the isochorismatase family. RutB subfamily.

The catalysed reaction is (Z)-3-ureidoacrylate + H2O + H(+) = (Z)-3-aminoacrylate + NH4(+) + CO2. It carries out the reaction (Z)-3-ureidoacrylate + H2O = (Z)-3-aminoacrylate + carbamate + H(+). It catalyses the reaction (Z)-2-methylureidoacrylate + H2O + H(+) = (Z)-2-methylaminoacrylate + NH4(+) + CO2. Hydrolyzes ureidoacrylate to form aminoacrylate and carbamate. The carbamate hydrolyzes spontaneously, thereby releasing one of the nitrogen atoms of the pyrimidine ring as ammonia and one of its carbon atoms as CO2. This chain is Ureidoacrylate amidohydrolase RutB, found in Escherichia coli (strain SMS-3-5 / SECEC).